Consider the following 100-residue polypeptide: Replication restart protein PriB (100 aa).

One can recognise an SSB domain in the interval 1–99 (MGFNNLVSLA…LRIQNIQEYK (99 aa)).

It belongs to the PriB family. As to quaternary structure, homodimer. Interacts with PriA and DnaT. Component of the replication restart primosome. Primosome assembly occurs via a 'hand-off' mechanism. PriA binds to replication forks, subsequently PriB then DnaT bind; DnaT then displaces ssDNA to generate the helicase loading substrate.

Involved in the restart of stalled replication forks, which reloads the replicative helicase on sites other than the origin of replication; the PriA-PriB pathway is the major replication restart pathway. During primosome assembly it facilitates complex formation between PriA and DnaT on DNA; stabilizes PriA on DNA. Stimulates the DNA unwinding activity of PriA helicase. The protein is Replication restart protein PriB of Neisseria meningitidis serogroup A / serotype 4A (strain DSM 15465 / Z2491).